The chain runs to 273 residues: Bifunctional protein FolD (273 aa).

Residues 155–157, S180, and T221 contribute to the NADP(+) site; that span reads GRS.

It belongs to the tetrahydrofolate dehydrogenase/cyclohydrolase family. In terms of assembly, homodimer.

It catalyses the reaction (6R)-5,10-methylene-5,6,7,8-tetrahydrofolate + NADP(+) = (6R)-5,10-methenyltetrahydrofolate + NADPH. The enzyme catalyses (6R)-5,10-methenyltetrahydrofolate + H2O = (6R)-10-formyltetrahydrofolate + H(+). It functions in the pathway one-carbon metabolism; tetrahydrofolate interconversion. Its function is as follows. Catalyzes the oxidation of 5,10-methylenetetrahydrofolate to 5,10-methenyltetrahydrofolate and then the hydrolysis of 5,10-methenyltetrahydrofolate to 10-formyltetrahydrofolate. The sequence is that of Bifunctional protein FolD from Coprothermobacter proteolyticus (strain ATCC 35245 / DSM 5265 / OCM 4 / BT).